The primary structure comprises 346 residues: fMet-Leu-Phe receptor (346 aa).

2 N-linked (GlcNAc...) asparagine glycosylation sites follow: asparagine 1 and asparagine 7. The Extracellular segment spans residues 1 to 24 (NSSLPTNISGGTPAVSAGYLFLDI). The helical transmembrane segment at 25 to 47 (ITYLVYAVTFVLGVLGNGLVIWV) threads the bilayer. At 48–58 (AGFRMTHTVTT) the chain is on the cytoplasmic side. Residues 59-80 (ISYLNLAVADFCFTSTLPFFMV) traverse the membrane as a helical segment. Over 81–97 (RKAMGGHWPFGWFLCKF) the chain is Extracellular. Cysteine 95 and cysteine 173 form a disulfide bridge. A helical transmembrane segment spans residues 98 to 118 (IFTIVDINLFGSVFLIALIAL). Over 119 to 137 (DRCVCVLHPVWTQNHRTVS) the chain is Cytoplasmic. The chain crosses the membrane as a helical span at residues 138-159 (LAKKVIIGPWVMALLLTLPVII). Residues 160–202 (RVTTVPGKMGTVSCTFNFSPWTNDPKERIKVAIAMLTVRGIIR) are Extracellular-facing. The chain crosses the membrane as a helical span at residues 203-223 (FIIGFSAPMSIVAVSYGLIAT). The Cytoplasmic segment spans residues 224-239 (KIHKQGLIKSSRPLRV). The helical transmembrane segment at 240–263 (LSFVAAAFFLCWSPYQVVAFIATV) threads the bilayer. Topologically, residues 264-282 (RIRELLQGMYKEISIAVDV) are extracellular. The helical transmembrane segment at 283 to 302 (TSALAFFNSCLNPMLYVFMG) threads the bilayer. Residues 303-346 (QDFRERLIHSLPASLERALTEASTQTSDTATNSTLPSAEVALQA) are Cytoplasmic-facing. Polar residues predominate over residues 324 to 338 (ASTQTSDTATNSTLP). Residues 324-346 (ASTQTSDTATNSTLPSAEVALQA) form a disordered region.

It belongs to the G-protein coupled receptor 1 family. In terms of processing, phosphorylated; which is necessary for desensitization.

Its subcellular location is the cell membrane. Functionally, high affinity receptor for N-formyl-methionyl peptides (fMLP), which are powerful neutrophil chemotactic factors. Binding of fMLP to the receptor stimulates intracellular calcium mobilization and superoxide anion release. This response is mediated via a G-protein that activates a phosphatidylinositol-calcium second messenger system. Receptor for TAFA4, mediates its effects on chemoattracting macrophages, promoting phagocytosis and increasing ROS release. Receptor for cathepsin CTSG, leading to increased phagocyte chemotaxis. This chain is fMet-Leu-Phe receptor (FPR1), found in Pongo pygmaeus (Bornean orangutan).